Here is a 132-residue protein sequence, read N- to C-terminus: D-ribose pyranase (132 aa).

His20 serves as the catalytic Proton donor. Substrate is bound by residues Asp28, His99, and 121-123 (YSN).

Belongs to the RbsD / FucU family. RbsD subfamily. As to quaternary structure, homodecamer.

It is found in the cytoplasm. It carries out the reaction beta-D-ribopyranose = beta-D-ribofuranose. The protein operates within carbohydrate metabolism; D-ribose degradation; D-ribose 5-phosphate from beta-D-ribopyranose: step 1/2. Functionally, catalyzes the interconversion of beta-pyran and beta-furan forms of D-ribose. This is D-ribose pyranase from Lactococcus lactis subsp. cremoris (strain MG1363).